The following is a 562-amino-acid chain: Chaperonin GroEL 1 (562 aa).

ATP-binding positions include 30–33, K51, 87–91, G415, 478–480, and D494; these read TLGP, DGTTT, and NAA.

The protein belongs to the chaperonin (HSP60) family. In terms of assembly, forms a cylinder of 14 subunits composed of two heptameric rings stacked back-to-back. Interacts with the co-chaperonin GroES.

Its subcellular location is the cytoplasm. It catalyses the reaction ATP + H2O + a folded polypeptide = ADP + phosphate + an unfolded polypeptide.. Together with its co-chaperonin GroES, plays an essential role in assisting protein folding. The GroEL-GroES system forms a nano-cage that allows encapsulation of the non-native substrate proteins and provides a physical environment optimized to promote and accelerate protein folding. In Sorangium cellulosum (strain So ce56) (Polyangium cellulosum (strain So ce56)), this protein is Chaperonin GroEL 1.